The sequence spans 314 residues: Probable cell division protein WhiA (314 aa).

Residues 274–308 constitute a DNA-binding region (H-T-H motif); sequence SLKELGEMVSTGTISKSGVNHRLRKLNELADKIRS.

This sequence belongs to the WhiA family.

Its function is as follows. Involved in cell division and chromosome segregation. In Staphylococcus carnosus (strain TM300), this protein is Probable cell division protein WhiA.